Reading from the N-terminus, the 54-residue chain is VATVDCSEYPKPVCSLEYMPLCGSDSQTYSNECNFCNAVVDSNGTLTLSHFGKC.

Residues 4–54 (VDCSEYPKPVCSLEYMPLCGSDSQTYSNECNFCNAVVDSNGTLTLSHFGKC) enclose the Kazal-like domain. 3 cysteine pairs are disulfide-bonded: cysteine 6–cysteine 36, cysteine 14–cysteine 33, and cysteine 22–cysteine 54. Asparagine 43 carries an N-linked (GlcNAc...) asparagine glycan.

The protein localises to the secreted. The polypeptide is Ovomucoid (Caracara plancus (Southern caracara)).